The sequence spans 172 residues: uncharacterized protein (172 aa).

This is an uncharacterized protein from Pasteurella multocida (strain Pm70).